The chain runs to 513 residues: Cyclin-dependent kinase C-2 (513 aa).

Positions 25 to 325 constitute a Protein kinase domain; it reads FEKLEQIGEG…AKDALDAEYF (301 aa). Residues 31–39 and Lys54 each bind ATP; that span reads IGEGTYGQV. Thr35 bears the Phosphothreonine mark. Tyr36 is modified (phosphotyrosine). Residue Asp164 is the Proton acceptor of the active site. The residue at position 191 (Ser191) is a Phosphoserine. Thr198 bears the Phosphothreonine mark. Basic and acidic residues predominate over residues 336–348; the sequence is SLPKYEASHEFQT. The interval 336–513 is disordered; that stretch reads SLPKYEASHE…RNQQQYGNWQ (178 aa). The segment covering 417-433 has biased composition (low complexity); that stretch reads PNRYPQGGNQGGYNPNR. Gly residues-rich tracts occupy residues 457 to 478 and 485 to 494; these read GGGM…GVGG and GPYGASGPGR. A compositionally biased stretch (polar residues) spans 497–513; that stretch reads NYNQGGSRNQQQYGNWQ.

Belongs to the protein kinase superfamily. CMGC Ser/Thr protein kinase family. CDC2/CDKX subfamily.

The enzyme catalyses L-seryl-[protein] + ATP = O-phospho-L-seryl-[protein] + ADP + H(+). It carries out the reaction L-threonyl-[protein] + ATP = O-phospho-L-threonyl-[protein] + ADP + H(+). It catalyses the reaction [DNA-directed RNA polymerase] + ATP = phospho-[DNA-directed RNA polymerase] + ADP + H(+). This Oryza sativa subsp. japonica (Rice) protein is Cyclin-dependent kinase C-2 (CDKC-2).